Consider the following 36-residue polypeptide: Omega-agatoxin-Aa1b (36 aa).

The protein belongs to the neurotoxin 04 (omega-agtx) family. 01 (type I omega-agtx) subfamily. Expressed by the venom gland.

The protein localises to the secreted. Its function is as follows. Omega-agatoxin are antagonist of voltage-gated calcium channels. They block insect neuromuscular transmission presynaptically. This toxin is a blocker of L-type calcium channels (Cav/CACNA1). This chain is Omega-agatoxin-Aa1b, found in Agelenopsis aperta (North American funnel-web spider).